A 643-amino-acid polypeptide reads, in one-letter code: Threonine--tRNA ligase 1 (643 aa).

A TGS domain is found at 3 to 64 (DMVKITFPDG…NEDGTVEIIT (62 aa)). Positions 245–542 (DHRKLGKELK…LIEEHKGALP (298 aa)) are catalytic. Zn(2+)-binding residues include cysteine 338, histidine 389, and histidine 519.

This sequence belongs to the class-II aminoacyl-tRNA synthetase family. In terms of assembly, homodimer. The cofactor is Zn(2+).

It localises to the cytoplasm. It carries out the reaction tRNA(Thr) + L-threonine + ATP = L-threonyl-tRNA(Thr) + AMP + diphosphate + H(+). In terms of biological role, catalyzes the attachment of threonine to tRNA(Thr) in a two-step reaction: L-threonine is first activated by ATP to form Thr-AMP and then transferred to the acceptor end of tRNA(Thr). Also edits incorrectly charged L-seryl-tRNA(Thr). This chain is Threonine--tRNA ligase 1 (thrS), found in Bacillus subtilis (strain 168).